We begin with the raw amino-acid sequence, 104 residues long: L-rhamnose mutarotase (104 aa).

Residue tyrosine 18 coordinates substrate. The Proton donor role is filled by histidine 22. Substrate is bound by residues tyrosine 41 and 76–77 (WW).

Belongs to the rhamnose mutarotase family. Homodimer.

The protein resides in the cytoplasm. The catalysed reaction is alpha-L-rhamnose = beta-L-rhamnose. It functions in the pathway carbohydrate metabolism; L-rhamnose metabolism. Functionally, involved in the anomeric conversion of L-rhamnose. The polypeptide is L-rhamnose mutarotase (Burkholderia ambifaria (strain MC40-6)).